The sequence spans 186 residues: Single-stranded DNA-binding protein 1 (186 aa).

One can recognise an SSB domain in the interval 1–108 (MDATVTVVGN…LEIDEIGPTL (108 aa)). Positions 120–186 (QAGHGVSPDP…EDFDSDEVPF (67 aa)) are disordered. Residues 132–141 (DSQTGQGIDS) show a composition bias toward polar residues. Acidic residues predominate over residues 175–186 (SYEDFDSDEVPF).

As to quaternary structure, homotetramer.

In Tropheryma whipplei (strain TW08/27) (Whipple's bacillus), this protein is Single-stranded DNA-binding protein 1 (ssb1).